The primary structure comprises 109 residues: Aquaporin-2 (109 aa).

The Cytoplasmic segment spans residues 1–6 (SVAFSR). A helical transmembrane segment spans residues 7 to 27 (AVLAEFLATLIFVFFGLGSAL). Residues 28 to 35 (SWPQALPS) lie on the Extracellular side of the membrane. Residues 36-54 (VLQIALAFGLAIGTLVQAL) traverse the membrane as a helical segment. At 55-59 (GHVSG) the chain is on the cytoplasmic side. The discontinuously helical intramembrane region spans 60-69 (AHINPAVTVA). The NPA 1 motif lies at 63-65 (NPA). Over 70 to 80 (CLVGCHVSFLR) the chain is Cytoplasmic. The helical transmembrane segment at 81–102 (AAFYVAAQLLGAVAGAAILHEI) threads the bilayer. Residues 103–109 (TPPDVRG) are Extracellular-facing.

It belongs to the MIP/aquaporin (TC 1.A.8) family. In terms of assembly, homotetramer. In terms of processing, serine phosphorylation is necessary and sufficient for expression at the apical membrane. Endocytosis is not phosphorylation-dependent. N-glycosylated.

It is found in the apical cell membrane. Its subcellular location is the basolateral cell membrane. It localises to the cell membrane. The protein localises to the cytoplasmic vesicle membrane. The protein resides in the golgi apparatus. It is found in the trans-Golgi network membrane. The enzyme catalyses H2O(in) = H2O(out). It carries out the reaction glycerol(in) = glycerol(out). Forms a water-specific channel that provides the plasma membranes of renal collecting duct with high permeability to water, thereby permitting water to move in the direction of an osmotic gradient. Plays an essential role in renal water homeostasis. Could also be permeable to glycerol. The protein is Aquaporin-2 of Dasypus novemcinctus (Nine-banded armadillo).